Here is a 157-residue protein sequence, read N- to C-terminus: Transcriptional repressor NrdR (157 aa).

The disordered stretch occupies residues 1–21; it reads MKCPHCGNNGSRVVDSRPTDE. A zinc finger lies at 3-34; it reads CPHCGNNGSRVVDSRPTDEGRVIRRRRECEKC. The region spanning 49–139 is the ATP-cone domain; the sequence is LLVIKKNGSR…VYRQFKDMHV (91 aa).

This sequence belongs to the NrdR family. Zn(2+) serves as cofactor.

Negatively regulates transcription of bacterial ribonucleotide reductase nrd genes and operons by binding to NrdR-boxes. This Pediococcus pentosaceus (strain ATCC 25745 / CCUG 21536 / LMG 10740 / 183-1w) protein is Transcriptional repressor NrdR.